The following is a 205-amino-acid chain: Large ribosomal subunit protein uL3 (205 aa).

Belongs to the universal ribosomal protein uL3 family. In terms of assembly, part of the 50S ribosomal subunit. Forms a cluster with proteins L14 and L19.

Functionally, one of the primary rRNA binding proteins, it binds directly near the 3'-end of the 23S rRNA, where it nucleates assembly of the 50S subunit. The sequence is that of Large ribosomal subunit protein uL3 from Bacteroides fragilis (strain ATCC 25285 / DSM 2151 / CCUG 4856 / JCM 11019 / LMG 10263 / NCTC 9343 / Onslow / VPI 2553 / EN-2).